The sequence spans 170 residues: Small ribosomal subunit protein mS25 (170 aa).

This sequence belongs to the mitochondrion-specific ribosomal protein mS25 family. As to quaternary structure, component of the mitochondrial ribosome small subunit (28S) which comprises a 12S rRNA and about 30 distinct proteins.

It localises to the mitochondrion. In Caenorhabditis elegans, this protein is Small ribosomal subunit protein mS25 (mrps-25).